The chain runs to 215 residues: MRDSGRSVSRRGGRGPKIERIANRYGLDGLGDDLVDAWLGDGRAQRSLRELEGDVNKRLIRAALDEAGAHVLDGEAENFYRLLTGDDVTAGSRTDARNTLRERGVDVEQLEADIISYQSVYNYLKRHRNVEREDDDDDETDATEAGLATIRKLRSRLRTVTIDVVDRLVKAERVFIGAYEVEVDIRVTCTDCDTRMTPTALLSSGHCDCERERDE.

Its function is as follows. Involved in cell-shape determination. Required for the formation of rods and wild-type-like motility. The chain is Rod-determining factor A from Haloferax volcanii (strain ATCC 29605 / DSM 3757 / JCM 8879 / NBRC 14742 / NCIMB 2012 / VKM B-1768 / DS2) (Halobacterium volcanii).